The primary structure comprises 103 residues: c-Myc-binding protein (103 aa).

This sequence belongs to the AMY1 family. As to quaternary structure, binds via its C-terminal region to the N-terminal region of MYC. Associates with AKAP1/S-AKAP84. Interacts with MYCBPAP. Interacts with CFAP91.

It is found in the cytoplasm. Its subcellular location is the nucleus. Its function is as follows. May control the transcriptional activity of MYC. Stimulates the activation of E box-dependent transcription by MYC. This chain is c-Myc-binding protein (MYCBP), found in Bos taurus (Bovine).